The sequence spans 630 residues: Golgin subfamily A member 8K (630 aa).

Residues M1 to E76 are disordered. Coiled-coil stretches lie at residues L86–D148 and L224–Q411. Residues K352–K362 show a composition bias toward basic and acidic residues. 2 disordered regions span residues K352 to N379 and G424 to S444.

Belongs to the GOLGA8 family.

This is Golgin subfamily A member 8K from Homo sapiens (Human).